A 721-amino-acid polypeptide reads, in one-letter code: Ribonuclease R (721 aa).

Positions 249 to 587 constitute an RNB domain; that stretch reads RRSIIDREII…VHRLLWMFIF (339 aa). The S1 motif domain occupies 639-719; sequence GKEFIGVVTT…LTRKIDFELV (81 aa).

This sequence belongs to the RNR ribonuclease family. RNase R subfamily.

The protein resides in the cytoplasm. It catalyses the reaction Exonucleolytic cleavage in the 3'- to 5'-direction to yield nucleoside 5'-phosphates.. In terms of biological role, 3'-5' exoribonuclease that releases 5'-nucleoside monophosphates and is involved in maturation of structured RNAs. In Ureaplasma parvum serovar 3 (strain ATCC 700970), this protein is Ribonuclease R.